The chain runs to 213 residues: Large ribosomal subunit protein uL4 (213 aa).

Residues 51–90 (TASTLTKAEVRGGGRKPYKQKHTGRARQGSIRNPHYVGGG) form a disordered region. Basic residues predominate over residues 63–75 (GGRKPYKQKHTGR).

Belongs to the universal ribosomal protein uL4 family. In terms of assembly, part of the 50S ribosomal subunit.

Functionally, one of the primary rRNA binding proteins, this protein initially binds near the 5'-end of the 23S rRNA. It is important during the early stages of 50S assembly. It makes multiple contacts with different domains of the 23S rRNA in the assembled 50S subunit and ribosome. Its function is as follows. Forms part of the polypeptide exit tunnel. The chain is Large ribosomal subunit protein uL4 from Malacoplasma penetrans (strain HF-2) (Mycoplasma penetrans).